A 110-amino-acid chain; its full sequence is Large ribosomal subunit protein P2B (110 aa).

Over residues threonine 73 to alanine 88 the composition is skewed to low complexity. Positions threonine 73–aspartate 110 are disordered. Residues alanine 91–methionine 104 show a composition bias toward acidic residues. At serine 100 the chain carries Phosphoserine.

It belongs to the eukaryotic ribosomal protein P1/P2 family. Component of the large ribosomal subunit (LSU). Mature yeast ribosomes consist of a small (40S) and a large (60S) subunit. The 40S small subunit contains 1 molecule of ribosomal RNA (18S rRNA) and at least 33 different proteins. The large 60S subunit contains 3 rRNA molecules (25S, 5.8S and 5S rRNA) and at least 46 different proteins. The acidic ribosomal P-proteins form the stalk structure of the 60S subunit. They are organized as a pentameric complex in which uL10/P0 interacts with 2 heterodimers of P1 and P2 proteins.

It is found in the cytoplasm. Its function is as follows. Component of the ribosome, a large ribonucleoprotein complex responsible for the synthesis of proteins in the cell. The small ribosomal subunit (SSU) binds messenger RNAs (mRNAs) and translates the encoded message by selecting cognate aminoacyl-transfer RNA (tRNA) molecules. The large subunit (LSU) contains the ribosomal catalytic site termed the peptidyl transferase center (PTC), which catalyzes the formation of peptide bonds, thereby polymerizing the amino acids delivered by tRNAs into a polypeptide chain. The nascent polypeptides leave the ribosome through a tunnel in the LSU and interact with protein factors that function in enzymatic processing, targeting, and the membrane insertion of nascent chains at the exit of the ribosomal tunnel. In Schizosaccharomyces pombe (strain 972 / ATCC 24843) (Fission yeast), this protein is Large ribosomal subunit protein P2B (rpp202).